A 432-amino-acid chain; its full sequence is Adenylosuccinate synthetase (432 aa).

GTP is bound by residues 13–19 and 41–43; these read GDEGKGK and GHT. Catalysis depends on D14, which acts as the Proton acceptor. Residues D14 and G41 each coordinate Mg(2+). Residues 14–17, 39–42, T130, R144, Q225, T240, and R304 each bind IMP; these read DEGK and NAGH. H42 acts as the Proton donor in catalysis. Position 300-306 (300-306) interacts with substrate; that stretch reads ATTGRRR. Residues R306, 332-334, and 415-417 contribute to the GTP site; these read KLD and STG.

It belongs to the adenylosuccinate synthetase family. In terms of assembly, homodimer. It depends on Mg(2+) as a cofactor.

It is found in the cytoplasm. The enzyme catalyses IMP + L-aspartate + GTP = N(6)-(1,2-dicarboxyethyl)-AMP + GDP + phosphate + 2 H(+). Its pathway is purine metabolism; AMP biosynthesis via de novo pathway; AMP from IMP: step 1/2. Its function is as follows. Plays an important role in the de novo pathway of purine nucleotide biosynthesis. Catalyzes the first committed step in the biosynthesis of AMP from IMP. This chain is Adenylosuccinate synthetase, found in Salmonella agona (strain SL483).